The primary structure comprises 353 residues: WAT1-related protein At3g28100 (353 aa).

The next 10 membrane-spanning stretches (helical) occupy residues 12–32, 43–63, 81–101, 105–125, 137–157, 187–207, 219–239, 252–272, 283–303, and 308–328; these read AVFL…STLF, YAFL…SLFF, IGLL…GIEY, TLAS…AIIF, SVAK…VVLY, WLIG…SFIL, FTVS…IGLV, FDIT…YYVI, LYLA…SAVF, and LYLG…AVMW. An EamA domain is found at 27–155; the sequence is GISTLFKVAT…LSLIGALVVV (129 aa).

Belongs to the drug/metabolite transporter (DMT) superfamily. Plant drug/metabolite exporter (P-DME) (TC 2.A.7.4) family.

The protein localises to the membrane. This chain is WAT1-related protein At3g28100, found in Arabidopsis thaliana (Mouse-ear cress).